Here is a 147-residue protein sequence, read N- to C-terminus: Truncated RecQ DNA helicase-like protein C212.06c (147 aa).

One can recognise a Helicase C-terminal domain in the interval 1-72 (MGVRLVVHYR…CVRSFLASEM (72 aa)). The disordered stretch occupies residues 100–147 (ETPKPAIATHSRYNASFSSSPPPQPGSSSGMSAMNTNTTSTTPVSGKT). The span at 125–141 (GSSSGMSAMNTNTTSTT) shows a compositional bias: low complexity.

The protein belongs to the helicase family. RecQ subfamily.

Truncated ATP-dependent 3'-5' DNA helicase. This chain is Truncated RecQ DNA helicase-like protein C212.06c, found in Schizosaccharomyces pombe (strain 972 / ATCC 24843) (Fission yeast).